The sequence spans 279 residues: MDPNPRLLILLVLLAFSATVAVAEDGESTGGSKVSLGRRAGGFLHGLKKEAVVEGDHGVALDEVGPGLFDALFASLSMILVSEIGDETFIIAALMAMRHPKSIVLSGALSALYVMTVLSTGLGRIVPNLISRKHTNSAATVLYLFFGLRLLYIAWKSDPKGSQKKEMEEVEEKLESGQGKSTLRRFFGRFCTPIFLEAFILTFLAEWGDRSQIATIALATHKNAIGVAVGASLGHTVCTSLAVIGGSMLASKISQRTVATIGGVLFLGFSVSSYFYPPL.

The N-terminal stretch at 1–23 (MDPNPRLLILLVLLAFSATVAVA) is a signal peptide. A run of 6 helical transmembrane segments spans residues 64 to 84 (VGPG…VSEI), 103 to 123 (IVLS…TGLG), 135 to 155 (TNSA…YIAW), 186 to 206 (FFGR…FLAE), 224 to 244 (AIGV…LAVI), and 258 to 278 (VATI…FYPP).

Belongs to the GDT1 family.

The protein localises to the membrane. The sequence is that of GDT1-like protein 3 from Oryza sativa subsp. japonica (Rice).